The following is a 59-amino-acid chain: Large ribosomal subunit protein uL30 (59 aa).

Belongs to the universal ribosomal protein uL30 family. In terms of assembly, part of the 50S ribosomal subunit.

The chain is Large ribosomal subunit protein uL30 from Buchnera aphidicola subsp. Schizaphis graminum (strain Sg).